Consider the following 556-residue polypeptide: Arginine--tRNA ligase 2 (556 aa).

A 'HIGH' region motif is present at residues 132-142 (ANPTGDLHLGH).

Belongs to the class-I aminoacyl-tRNA synthetase family. As to quaternary structure, monomer.

The protein localises to the cytoplasm. The enzyme catalyses tRNA(Arg) + L-arginine + ATP = L-arginyl-tRNA(Arg) + AMP + diphosphate. In Bacillus thuringiensis subsp. konkukian (strain 97-27), this protein is Arginine--tRNA ligase 2.